Consider the following 137-residue polypeptide: Chaperone protein YscB (137 aa).

As to quaternary structure, interacts with SycN to form a complex which specifically binds to YopN.

The protein localises to the cytoplasm. The protein resides in the cell inner membrane. Its function is as follows. Functions as a specific chaperone for YopN. It could facilitate the secretion and the subsequent translocation of YopN. The polypeptide is Chaperone protein YscB (yscB) (Yersinia pestis).